Consider the following 256-residue polypeptide: Hydroxyacylglutathione hydrolase (256 aa).

The Zn(2+) site is built by H57, H59, D61, H62, H115, D134, and H172.

This sequence belongs to the metallo-beta-lactamase superfamily. Glyoxalase II family. Monomer. The cofactor is Zn(2+).

The enzyme catalyses an S-(2-hydroxyacyl)glutathione + H2O = a 2-hydroxy carboxylate + glutathione + H(+). The protein operates within secondary metabolite metabolism; methylglyoxal degradation; (R)-lactate from methylglyoxal: step 2/2. Its function is as follows. Thiolesterase that catalyzes the hydrolysis of S-D-lactoyl-glutathione to form glutathione and D-lactic acid. The protein is Hydroxyacylglutathione hydrolase of Rhizobium etli (strain ATCC 51251 / DSM 11541 / JCM 21823 / NBRC 15573 / CFN 42).